The following is a 710-amino-acid chain: Fatty acid oxidation complex subunit alpha (710 aa).

The interval 1 to 190 is enoyl-CoA hydratase; it reads MSMEKTFNLA…KMGLVNDVVP (190 aa). The segment at 310 to 710 is 3-hydroxyacyl-CoA dehydrogenase; it reads RKVKKVMVLG…ASDGSQFYKK (401 aa).

In the N-terminal section; belongs to the enoyl-CoA hydratase/isomerase family. This sequence in the central section; belongs to the 3-hydroxyacyl-CoA dehydrogenase family. Heterotetramer of two alpha chains (FadJ) and two beta chains (FadI).

It is found in the cytoplasm. It catalyses the reaction a (3S)-3-hydroxyacyl-CoA = a (2E)-enoyl-CoA + H2O. The catalysed reaction is a 4-saturated-(3S)-3-hydroxyacyl-CoA = a (3E)-enoyl-CoA + H2O. It carries out the reaction a (3S)-3-hydroxyacyl-CoA + NAD(+) = a 3-oxoacyl-CoA + NADH + H(+). The enzyme catalyses (3S)-3-hydroxybutanoyl-CoA = (3R)-3-hydroxybutanoyl-CoA. It participates in lipid metabolism; fatty acid beta-oxidation. Catalyzes the formation of a hydroxyacyl-CoA by addition of water on enoyl-CoA. Also exhibits 3-hydroxyacyl-CoA epimerase and 3-hydroxyacyl-CoA dehydrogenase activities. In Shewanella frigidimarina (strain NCIMB 400), this protein is Fatty acid oxidation complex subunit alpha.